Here is a 131-residue protein sequence, read N- to C-terminus: Small ribosomal subunit protein bS6 (131 aa).

A disordered region spans residues 98–131; that stretch reads EASPMVKAKDERRERRDDFANETADDSDAGDSEE. The segment covering 104–116 has biased composition (basic and acidic residues); that stretch reads KAKDERRERRDDF. Positions 120-131 are enriched in acidic residues; it reads TADDSDAGDSEE.

Belongs to the bacterial ribosomal protein bS6 family.

In terms of biological role, binds together with bS18 to 16S ribosomal RNA. This chain is Small ribosomal subunit protein bS6, found in Enterobacter sp. (strain 638).